We begin with the raw amino-acid sequence, 202 residues long: MADS-box transcription factor 33 (202 aa).

Positions 1-61 (MVRGKVQMRR…GKLHELATNG (61 aa)) constitute an MADS-box domain. Residues 87-177 (QQVAEQGIFL…QEKVKEQQKL (91 aa)) enclose the K-box domain.

As to expression, expressed in seedling roots.

It is found in the nucleus. Its function is as follows. Probable transcription factor. This is MADS-box transcription factor 33 (MADS33) from Oryza sativa subsp. japonica (Rice).